Here is a 373-residue protein sequence, read N- to C-terminus: Muconate cycloisomerase 1 (373 aa).

Lysine 169 is an active-site residue. The active-site Proton acceptor is the lysine 169. The Mn(2+) site is built by aspartate 198, glutamate 224, and aspartate 249. The Proton donor role is filled by glutamate 327.

It belongs to the mandelate racemase/muconate lactonizing enzyme family. Requires Mn(2+) as cofactor.

It catalyses the reaction (S)-muconolactone = cis,cis-muconate + H(+). This chain is Muconate cycloisomerase 1 (catB), found in Rhodococcus opacus (Nocardia opaca).